Reading from the N-terminus, the 349-residue chain is Sphingolipid C4-hydroxylase SUR2 (349 aa).

5 consecutive transmembrane segments (helical) span residues 9–29, 50–70, 99–119, 148–168, and 209–229; these read AAGSFPLAFGLKTSFGFMHYA, VLALVAPVVAYWALSGIFHVI, FLEVILQHIIQTIVGLIFMHF, IYYGYMYGMSALKIFAGFLFV, and PVEGFLLDTLGTGIAMTLTHL. The 136-residue stretch at 162–297 folds into the Fatty acid hydroxylase domain; that stretch reads FAGFLFVDTW…FTFWDNLFQT (136 aa).

The protein belongs to the sterol desaturase family.

It is found in the endoplasmic reticulum membrane. It carries out the reaction sphinganine + 2 Fe(II)-[cytochrome b5] + O2 + 2 H(+) = (4R)-hydroxysphinganine + 2 Fe(III)-[cytochrome b5] + H2O. It catalyses the reaction an N-acylsphinganine + 2 Fe(II)-[cytochrome b5] + O2 + 2 H(+) = an N-acyl-(4R)-4-hydroxysphinganine + 2 Fe(III)-[cytochrome b5] + H2O. The catalysed reaction is an N-acyleicosasphinganine + 2 Fe(II)-[cytochrome b5] + O2 + 2 H(+) = N-acyl-4-hydroxyeicosasphinganine + 2 Fe(III)-[cytochrome b5] + H2O. It functions in the pathway membrane lipid metabolism; sphingolipid biosynthesis. Functionally, required for hydroxylation of C-4 in the sphingoid moiety of ceramide. Catalyzes the conversion of sphinganine to phytosphingosine in sphingolipid biosynthesis. Involved in the response to syringomycin. The chain is Sphingolipid C4-hydroxylase SUR2 (SUR2) from Saccharomyces cerevisiae (strain ATCC 204508 / S288c) (Baker's yeast).